The chain runs to 381 residues: Class E basic helix-loop-helix protein 22 (381 aa).

3 disordered regions span residues 30-94 (RLEA…GGGG), 135-154 (RGSV…DSDG), and 188-242 (HLHG…EQKA). Positions 82–94 (GGGGGSAGSGGGG) are enriched in gly residues. Gly residues predominate over residues 198-225 (GGLGGGGGGGSSSGSSGGGGGSGSGSGG). One can recognise a bHLH domain in the interval 242 to 296 (ALRLNINARERRRMHDLNDALDELRAVIPYAHSPSVRKLSKIATLLLAKNYILMQ).

As to quaternary structure, interacts with PRDM8. As to expression, brain-specific, with the highest expression in the cerebellum.

It localises to the nucleus. In terms of biological role, inhibits DNA binding of TCF3/E47 homodimers and TCF3 (E47)/NEUROD1 heterodimers and acts as a strong repressor of Neurod1 and Myod-responsive genes, probably by heterodimerization with class a basic helix-loop-helix factors. Despite the presence of an intact basic domain, does not bind to DNA. In the brain, may function as an area-specific transcription factor that regulates the postmitotic acquisition of area identities and elucidate the genetic hierarchy between progenitors and postmitotic neurons driving neocortical arealization. May be required for the survival of a specific population of inhibitory neurons in the superficial laminae of the spinal cord dorsal horn that may regulate pruritis. Seems to play a crucial role in the retinogenesis, in the specification of amacrine and bipolar subtypes. Forms with PRDM8 a transcriptional repressor complex controlling genes involved in neural development and neuronal differentiation. The sequence is that of Class E basic helix-loop-helix protein 22 (BHLHE22) from Homo sapiens (Human).